The chain runs to 802 residues: Acetyl-CoA decarbonylase/synthase complex subunit alpha (802 aa).

6 residues coordinate [4Fe-4S] cluster: Cys69, Cys72, Cys73, Cys75, Cys80, and Cys90. A CO-binding site is contributed by His113. [Ni-4Fe-4S] cluster-binding residues include His246, Cys274, and Cys319. 2 consecutive 4Fe-4S ferredoxin-type domains span residues 404 to 432 (EELK…ISEA) and 442 to 473 (SKFE…VIEK). 8 residues coordinate [4Fe-4S] cluster: Cys413, Cys416, Cys419, Cys423, Cys451, Cys454, Cys457, and Cys461. Residues Cys519, Cys548, and Cys583 each coordinate [Ni-4Fe-4S] cluster.

It belongs to the Ni-containing carbon monoxide dehydrogenase family. In terms of assembly, heterotetramer of two alpha and two epsilon subunits. The ACDS complex is made up of alpha, epsilon, beta, gamma and delta subunits with a probable stoichiometry of (alpha(2)epsilon(2))(4)-beta(8)-(gamma(1)delta(1))(8). It depends on [4Fe-4S] cluster as a cofactor. [Ni-4Fe-4S] cluster is required as a cofactor.

The catalysed reaction is CO + 2 oxidized [2Fe-2S]-[ferredoxin] + H2O = 2 reduced [2Fe-2S]-[ferredoxin] + CO2 + 2 H(+). It participates in one-carbon metabolism; methanogenesis from acetate. In terms of biological role, part of the ACDS complex that catalyzes the reversible cleavage of acetyl-CoA, allowing growth on acetate as sole source of carbon and energy. The alpha-epsilon subcomponent functions as a carbon monoxide dehydrogenase. The polypeptide is Acetyl-CoA decarbonylase/synthase complex subunit alpha (Methanococcoides burtonii (strain DSM 6242 / NBRC 107633 / OCM 468 / ACE-M)).